Consider the following 414-residue polypeptide: MTSAPQSVNWKRNLFVTWLGCFLTGAAFSLIMPFLPLYVEELGVSGHQSLNMWSGLVFSITFLFSAIAAPFWGSLADRKGRKIMLLRSALGMGIVMVLMGMAQNIWQFLALRALLGLLGGFIPNANALIATQVPRNKSGWALGTLSTGGVSGALIGPLIGGLLADNYGLRPVFFITAAVLFACFVMTWFYVREQFAPVLKKDMLNGRQVFNSLKNPKLILSLFVTTMIIQIATGSIAPILTLYVRELAGDIHNLAFVSGMIASVPGVAALISAPRLGKLGDKIGPERILIAMLALSVLILIPMAFVQTPLQLGILRFLLGATDGALLPAVQTLLIYNCTNQVAGRIFSYNQSFRDVGNVSGPLLGAAVSASYGFRAVFCVTAVVVLFNALYSYWCLQRQPLKAQQRAIQQRQDS.

10 helical membrane passes run 14–34 (LFVTWLGCFLTGAAFSLIMPF), 56–76 (LVFSITFLFSAIAAPFWGSLA), 89–109 (ALGMGIVMVLMGMAQNIWQFL), 113–133 (ALLGLLGGFIPNANALIATQV), 144–164 (TLSTGGVSGALIGPLIGGLLA), 171–191 (PVFFITAAVLFACFVMTWFYV), 219–239 (ILSLFVTTMIIQIATGSIAPI), 254–274 (LAFVSGMIASVPGVAALISAP), 288–308 (ILIAMLALSVLILIPMAFVQT), and 376–396 (AVFCVTAVVVLFNALYSYWCL).

This sequence belongs to the major facilitator superfamily. DHA1 family. MdtG (TC 2.A.1.2.20) subfamily.

The protein resides in the cell inner membrane. The polypeptide is Multidrug resistance protein MdtG (Yersinia enterocolitica serotype O:8 / biotype 1B (strain NCTC 13174 / 8081)).